The following is a 432-amino-acid chain: Glutamate-1-semialdehyde 2,1-aminomutase (432 aa).

Lys-265 is modified (N6-(pyridoxal phosphate)lysine).

It belongs to the class-III pyridoxal-phosphate-dependent aminotransferase family. HemL subfamily. Homodimer. Requires pyridoxal 5'-phosphate as cofactor.

It is found in the cytoplasm. The enzyme catalyses (S)-4-amino-5-oxopentanoate = 5-aminolevulinate. It participates in porphyrin-containing compound metabolism; protoporphyrin-IX biosynthesis; 5-aminolevulinate from L-glutamyl-tRNA(Glu): step 2/2. The chain is Glutamate-1-semialdehyde 2,1-aminomutase from Histophilus somni (strain 129Pt) (Haemophilus somnus).